The following is a 295-amino-acid chain: Small ribosomal subunit protein uS2 (295 aa).

The protein belongs to the universal ribosomal protein uS2 family.

This chain is Small ribosomal subunit protein uS2, found in Rickettsia canadensis (strain McKiel).